We begin with the raw amino-acid sequence, 69 residues long: uncharacterized protein (69 aa).

The protein resides in the mitochondrion. This is an uncharacterized protein from Marchantia polymorpha (Common liverwort).